A 64-amino-acid chain; its full sequence is Large ribosomal subunit protein bL32 (64 aa).

Positions 1 to 20 (MALPKYKTSRANTHSRRANW) are disordered.

The protein belongs to the bacterial ribosomal protein bL32 family.

The polypeptide is Large ribosomal subunit protein bL32 (Bifidobacterium adolescentis (strain ATCC 15703 / DSM 20083 / NCTC 11814 / E194a)).